Consider the following 90-residue polypeptide: Probable Fe(2+)-trafficking protein (90 aa).

Belongs to the Fe(2+)-trafficking protein family.

Could be a mediator in iron transactions between iron acquisition and iron-requiring processes, such as synthesis and/or repair of Fe-S clusters in biosynthetic enzymes. This Marinobacter nauticus (strain ATCC 700491 / DSM 11845 / VT8) (Marinobacter aquaeolei) protein is Probable Fe(2+)-trafficking protein.